The primary structure comprises 451 residues: MRSPAPSLPDIIAALATAPGRGGIGVVRVSGAALAPFARALTGREPKPRHAAFTHFVDAVGKPIDEGILLYFPAPHSFTGEDVIELQGHGGPVVLQLVLARCLELGARLAEPGEFSRRAFLNGKMDLAQAEAVADLIEASTVVAARSAVRSLSGVFSDEMHRLTDALIDLRMLVEATLDFPDEDVEFLENARALERLDAIRVKLERVLERARQGALLRSGMNVVLVGQPNVGKSSLLNCLAGDERAIVTDIAGTTRDAVRETIAIEGIPIHVIDTAGLRETADPVERLGVERTWREIARADVILRIVDARVGPQPGDDAIDAALPEGVERITIFNKIDLCGLEPARLQHDDGVVIQLSAQLALGVDLLRSELLRVAGWHAHGDDVVLARERHLVALRDALTHVVAARSQCGALELFAEELRLAQIRIGEITGEFSSDDLLGVIFSRFCIGK.

Residues Arg28, Glu85, and Lys124 each contribute to the (6S)-5-formyl-5,6,7,8-tetrahydrofolate site. One can recognise a TrmE-type G domain in the interval Gly220 to Gly377. Asn230 serves as a coordination point for K(+). GTP is bound by residues Asn230–Ser235, Thr249–Thr255, and Asp274–Gly277. Ser234 lines the Mg(2+) pocket. K(+) is bound by residues Thr249, Ile251, and Thr254. Thr255 is a binding site for Mg(2+). Lys451 is a binding site for (6S)-5-formyl-5,6,7,8-tetrahydrofolate.

Belongs to the TRAFAC class TrmE-Era-EngA-EngB-Septin-like GTPase superfamily. TrmE GTPase family. As to quaternary structure, homodimer. Heterotetramer of two MnmE and two MnmG subunits. K(+) is required as a cofactor.

It localises to the cytoplasm. Functionally, exhibits a very high intrinsic GTPase hydrolysis rate. Involved in the addition of a carboxymethylaminomethyl (cmnm) group at the wobble position (U34) of certain tRNAs, forming tRNA-cmnm(5)s(2)U34. The sequence is that of tRNA modification GTPase MnmE from Aromatoleum aromaticum (strain DSM 19018 / LMG 30748 / EbN1) (Azoarcus sp. (strain EbN1)).